Consider the following 360-residue polypeptide: Protein Wnt-2 (360 aa).

The first 25 residues, 1 to 25 (MNAPLCGIWLWLPLLLTWLTPEVSS), serve as a signal peptide directing secretion. 11 disulfides stabilise this stretch: Cys-76–Cys-87, Cys-127–Cys-135, Cys-137–Cys-157, Cys-206–Cys-220, Cys-208–Cys-215, Cys-278–Cys-309, Cys-294–Cys-304, Cys-308–Cys-348, Cys-324–Cys-339, Cys-326–Cys-336, and Cys-331–Cys-332. The O-palmitoleoyl serine; by PORCN moiety is linked to residue Ser-212. Asn-295 carries N-linked (GlcNAc...) asparagine glycosylation.

This sequence belongs to the Wnt family. Post-translationally, palmitoleoylation is required for efficient binding to frizzled receptors. Depalmitoleoylation leads to Wnt signaling pathway inhibition.

The protein resides in the secreted. The protein localises to the extracellular space. It is found in the extracellular matrix. In terms of biological role, ligand for members of the frizzled family of seven transmembrane receptors. Functions in the canonical Wnt signaling pathway that results in activation of transcription factors of the TCF/LEF family. Functions as a upstream regulator of FGF10 expression. Plays an important role in embryonic lung development. May contribute to embryonic brain development by regulating the proliferation of dopaminergic precursors and neurons. The protein is Protein Wnt-2 (WNT2) of Otolemur garnettii (Small-eared galago).